Consider the following 49-residue polypeptide: Large ribosomal subunit protein eL40 (49 aa).

This sequence belongs to the eukaryotic ribosomal protein eL40 family.

The sequence is that of Large ribosomal subunit protein eL40 from Methanosarcina barkeri (strain Fusaro / DSM 804).